A 647-amino-acid chain; its full sequence is MRFIGSKVNLLDNIQEVIEENVKDDAHVFMDLFSGTGIVGENFKKDYQVLSNDSLYFSYILLKAKIENNSIPNFSELKKIGIKEPLHYLENEEFEISHEFFLTHNYSPYMGCERMYFTVENASRIDFIRLTLNRWKNESLINELEFAYLLAILIEAVPFISNISGTYGAYLKHWDKRALGKLKLRTLDIGNNHYANKTYNEDANSLIEKVYGDILYIDPPYNGRQYISNYHLLETIALYDYPEIYGKTGLRPYVESKSLYCQKKEVGNAFNHLIEKANFRHILVSYSSEGLLLEEEIESILKSHGLPETYRIYKMPYRKYKSKHKQEASELHEYIFYIQKDIALTNSVKSNKKIEVGKHKTNSYIKSPLNYVGGKHKLLNQIVPLFPDKIDTFVDLFSGGFNVGINVNANKIIATDINTYVVEVLDTMKKTSVEEVIAHIERRIEEYGLSKSNEEGFKAFRNYYNKTKKPLDLYTLICYSFNYQFRFNNNQEYNNPFGRERSQFSPALKKKLVLFIEALHEKNVQFVCSEFEHFNFSQLDQNDLVYCDPPYLITTGSYNDGNRGFKDWNRLQEIKLLDILDHLNSKGVYFALSNVLSHKGLENELLLEWSKKYNIHHLQHSYSNSSHNTTRGESQEVLITNYTNYTK.

2 short sequence motifs (adenine-specific methylase) span residues 218–221 and 548–551; these read DPPY.

It belongs to the N(4)/N(6)-methyltransferase family. Monomer.

The enzyme catalyses a 2'-deoxyadenosine in DNA + S-adenosyl-L-methionine = an N(6)-methyl-2'-deoxyadenosine in DNA + S-adenosyl-L-homocysteine + H(+). In terms of biological role, an alpha subtype methylase that recognizes the asymmetric double-stranded sequence 5'-GGATG-3', methylates A-3 of both strands, and protects the DNA from cleavage by the FokI endonuclease. The sequence is that of Type II methyltransferase M.FokI from Planomicrobium okeanokoites (Planococcus okeanokoites).